The following is a 513-amino-acid chain: uncharacterized protein (513 aa).

The protein belongs to the NodU/CmcH family.

This is an uncharacterized protein from Methanocaldococcus jannaschii (strain ATCC 43067 / DSM 2661 / JAL-1 / JCM 10045 / NBRC 100440) (Methanococcus jannaschii).